We begin with the raw amino-acid sequence, 431 residues long: D-tagatose-1,6-bisphosphate aldolase subunit KbaZ (431 aa).

The protein belongs to the GatZ/KbaZ family. KbaZ subfamily. Forms a complex with KbaY.

The protein operates within carbohydrate metabolism; D-tagatose 6-phosphate degradation; D-glyceraldehyde 3-phosphate and glycerone phosphate from D-tagatose 6-phosphate: step 2/2. Functionally, component of the tagatose-1,6-bisphosphate aldolase KbaYZ that is required for full activity and stability of the Y subunit. Could have a chaperone-like function for the proper and stable folding of KbaY. When expressed alone, KbaZ does not show any aldolase activity. The chain is D-tagatose-1,6-bisphosphate aldolase subunit KbaZ from Citrobacter koseri (strain ATCC BAA-895 / CDC 4225-83 / SGSC4696).